The chain runs to 253 residues: Sugar fermentation stimulation protein homolog (253 aa).

This sequence belongs to the SfsA family.

This Chromohalobacter salexigens (strain ATCC BAA-138 / DSM 3043 / CIP 106854 / NCIMB 13768 / 1H11) protein is Sugar fermentation stimulation protein homolog.